The following is a 91-amino-acid chain: C-C motif chemokine 5 (91 aa).

The signal sequence occupies residues 1 to 23; it reads MKISAAVLTVVLMAASLCAPASA. Intrachain disulfides connect Cys-33–Cys-57 and Cys-34–Cys-73.

Belongs to the intercrine beta (chemokine CC) family.

The protein localises to the secreted. Functionally, chemoattractant for blood monocytes, memory T-helper cells and eosinophils. Causes the release of histamine from basophils and activates eosinophils. May activate several chemokine receptors including CCR1, CCR3, CCR4 and CCR5. May also be an agonist of the G protein-coupled receptor GPR75. Together with GPR75, may play a role in neuron survival through activation of a downstream signaling pathway involving the PI3, Akt and MAP kinases. By activating GPR75 may also play a role in insulin secretion by islet cells. The chain is C-C motif chemokine 5 (CCL5) from Sigmodon hispidus (Hispid cotton rat).